A 263-amino-acid polypeptide reads, in one-letter code: HLA class II histocompatibility antigen, DM beta chain (263 aa).

The signal sequence occupies residues Met1–Ala18. Positions Gly19–Thr112 are beta-1. Over Gly19–Lys218 the chain is Lumenal. 2 disulfide bridges follow: Cys29–Cys97 and Cys43–Cys53. N-linked (GlcNAc...) asparagine glycosylation occurs at Asn110. The tract at residues Arg113–Trp207 is beta-2. Residues Pro114–Thr208 form the Ig-like C1-type domain. A disulfide bond links Cys135 and Cys192. A connecting peptide region spans residues Thr208–Lys218. A helical membrane pass occupies residues Val219 to Ser239. The Cytoplasmic segment spans residues Trp240 to Ser263. The short motif at Tyr248 to Leu251 is the YXXZ motif element.

The protein belongs to the MHC class II family. As to quaternary structure, heterodimer of an alpha chain (DMA) and a beta chain (DMB). Interacts with MHCII; this interaction mediates rapid selection of high-affinity peptides in a pH-dependent manner, with an optimum at pH 5.5.

It is found in the late endosome membrane. It localises to the lysosome membrane. Its function is as follows. Plays a critical role in catalyzing the release of class II-associated invariant chain peptide (CLIP) from newly synthesized MHC class II molecules and freeing the peptide binding site for acquisition of antigenic peptides. In B-cells, the interaction between HLA-DM and MHC class II molecules is regulated by HLA-DO. The sequence is that of HLA class II histocompatibility antigen, DM beta chain (HLA-DMB) from Homo sapiens (Human).